A 437-amino-acid polypeptide reads, in one-letter code: Glutamate-1-semialdehyde 2,1-aminomutase (437 aa).

At Lys277 the chain carries N6-(pyridoxal phosphate)lysine.

This sequence belongs to the class-III pyridoxal-phosphate-dependent aminotransferase family. HemL subfamily. In terms of assembly, homodimer. The cofactor is pyridoxal 5'-phosphate.

The protein resides in the cytoplasm. It carries out the reaction (S)-4-amino-5-oxopentanoate = 5-aminolevulinate. The protein operates within porphyrin-containing compound metabolism; protoporphyrin-IX biosynthesis; 5-aminolevulinate from L-glutamyl-tRNA(Glu): step 2/2. Its pathway is porphyrin-containing compound metabolism; chlorophyll biosynthesis. The protein is Glutamate-1-semialdehyde 2,1-aminomutase of Thermosynechococcus vestitus (strain NIES-2133 / IAM M-273 / BP-1).